We begin with the raw amino-acid sequence, 116 residues long: Large ribosomal subunit protein bL17 (116 aa).

This sequence belongs to the bacterial ribosomal protein bL17 family. In terms of assembly, part of the 50S ribosomal subunit. Contacts proteins L3 and L32.

Its function is as follows. Binds to the 23S rRNA. This is Large ribosomal subunit protein bL17 from Deinococcus radiodurans (strain ATCC 13939 / DSM 20539 / JCM 16871 / CCUG 27074 / LMG 4051 / NBRC 15346 / NCIMB 9279 / VKM B-1422 / R1).